Here is an 83-residue protein sequence, read N- to C-terminus: Calsensin (83 aa).

2 EF-hand domains span residues 4 to 39 (KVKAELEAAFKKLDANGDGYVTALELQTFMVTLDAY) and 46 to 81 (KVKEASAKLIKMADKNSDGKISKEEFLNANAELLCQ). Ca(2+) contacts are provided by Asp-17, Asn-19, Asp-21, Tyr-23, Glu-28, Asp-59, Asn-61, Asp-63, Lys-65, and Glu-70.

Selectively expressed in a small group of neurons.

It is found in the cytoplasm. In terms of biological role, may function as a trigger protein which interacts with a larger protein. May mediate calcium-dependent signal transduction events in the growth cones and axons of a small group of sensory neurons which fasciculate in a single axon tract. In Haemopis marmorata (Green horse leech), this protein is Calsensin.